Consider the following 342-residue polypeptide: Photosystem II assembly lipoprotein Ycf48 (342 aa).

The signal sequence occupies residues 1 to 28 (MPVKFPSLKFEQLKQLVLVAAIAVFCVS). The N-palmitoyl cysteine moiety is linked to residue C29. The S-diacylglycerol cysteine moiety is linked to residue C29. An Arg-rich patch motif is present at residues 196–220 (RGNFYSTWAPGQTEWTPHNRNSSRR). A propeptide spanning residues 340–342 (MVP) is cleaved from the precursor.

Belongs to the Ycf48 family. Part of early PSII assembly complexes which includes D1 (psbA) and PsbI; not found in mature PSII. By two-hybrid analysis in yeast interacts with precursor and intermediate forms of D1, but less with mature D1. Binds to the lumenal side of PSI and PSII complexes. Coimmunoprecipitates with YidC. Purified chlorophyll- and carotenoid-containing photosystem II (PSII) assembly intermediate complex RCII* (iD1, D1, D2, PsbE, PsbF, PsbI, Ycf39, Ycf48, HliC and HliD). The last 3 residues are removed in the mature protein.

It localises to the cellular thylakoid membrane. In terms of biological role, a factor required for optimal assembly of photosystem II (PSII) which acts in the early stages of PSII assembly. Also plays a role in replacement of photodamaged D1 (psbA). May interact with precursor D1 to prevent its premature processing before association with D2 (psbD). May also play a role in chlorophyll insertion into chlorophyll-binding proteins. Increasing levels of chlorophyll precursors partially suppresses deletion of this protein, supporting the idea that Ycf48 assists YidC in synthesis of chlorophyll-binding proteins. The Ycf39-Hlip complex binds D1 at an early stage of PSII assembly along with Ycf48, ribosomes and ChlG, the last enzyme in chlorophyll biosynthesis; it may be involved in chlorophyll reuse and delivery to D1 in the initial stages of PSII assembly. This Synechocystis sp. (strain ATCC 27184 / PCC 6803 / Kazusa) protein is Photosystem II assembly lipoprotein Ycf48.